A 370-amino-acid polypeptide reads, in one-letter code: Histidinol-phosphate aminotransferase 2 (370 aa).

The residue at position 230 (lysine 230) is an N6-(pyridoxal phosphate)lysine.

This sequence belongs to the class-II pyridoxal-phosphate-dependent aminotransferase family. Histidinol-phosphate aminotransferase subfamily. Homodimer. Requires pyridoxal 5'-phosphate as cofactor.

The catalysed reaction is L-histidinol phosphate + 2-oxoglutarate = 3-(imidazol-4-yl)-2-oxopropyl phosphate + L-glutamate. It participates in amino-acid biosynthesis; L-histidine biosynthesis; L-histidine from 5-phospho-alpha-D-ribose 1-diphosphate: step 7/9. This chain is Histidinol-phosphate aminotransferase 2, found in Pseudomonas fluorescens (strain Pf0-1).